We begin with the raw amino-acid sequence, 436 residues long: Proteasome-activating nucleotidase (436 aa).

Residues 7-98 (KDVRDLCEKF…LRSDLQRMKK (92 aa)) adopt a coiled-coil conformation. ATP is bound by residues 223–228 (GTGKTL) and His-362. The segment at 434 to 436 (AYH) is docks into pockets in the proteasome alpha-ring to cause gate opening.

Belongs to the AAA ATPase family. Homohexamer. The hexameric complex has a two-ring architecture resembling a top hat that caps the 20S proteasome core at one or both ends. Upon ATP-binding, the C-terminus of PAN interacts with the alpha-rings of the proteasome core by binding to the intersubunit pockets.

Its subcellular location is the cytoplasm. ATPase which is responsible for recognizing, binding, unfolding and translocation of substrate proteins into the archaeal 20S proteasome core particle. Is essential for opening the gate of the 20S proteasome via an interaction with its C-terminus, thereby allowing substrate entry and access to the site of proteolysis. Thus, the C-termini of the proteasomal ATPase function like a 'key in a lock' to induce gate opening and therefore regulate proteolysis. Unfolding activity requires energy from ATP hydrolysis, whereas ATP binding alone promotes ATPase-20S proteasome association which triggers gate opening, and supports translocation of unfolded substrates. The polypeptide is Proteasome-activating nucleotidase (Methanopyrus kandleri (strain AV19 / DSM 6324 / JCM 9639 / NBRC 100938)).